The primary structure comprises 399 residues: Acetate kinase (399 aa).

A Mg(2+)-binding site is contributed by asparagine 7. Lysine 14 contacts ATP. Arginine 89 contributes to the substrate binding site. The active-site Proton donor/acceptor is aspartate 146. Residues 206-210, 280-282, and 328-332 contribute to the ATP site; these read HIGSG, DFR, and GIGEN. Residue glutamate 382 coordinates Mg(2+).

Belongs to the acetokinase family. As to quaternary structure, homodimer. The cofactor is Mg(2+). Requires Mn(2+) as cofactor.

Its subcellular location is the cytoplasm. The catalysed reaction is acetate + ATP = acetyl phosphate + ADP. The protein operates within metabolic intermediate biosynthesis; acetyl-CoA biosynthesis; acetyl-CoA from acetate: step 1/2. Functionally, catalyzes the formation of acetyl phosphate from acetate and ATP. Can also catalyze the reverse reaction. This is Acetate kinase from Campylobacter hominis (strain ATCC BAA-381 / DSM 21671 / CCUG 45161 / LMG 19568 / NCTC 13146 / CH001A).